Consider the following 804-residue polypeptide: Elongation factor G, mitochondrial (804 aa).

A mitochondrion-targeting transit peptide spans 1-9 (MVRPAQVRA). The 287-residue stretch at 103–389 (SKVRNIGIAA…GVCDYLPNPS (287 aa)) folds into the tr-type G domain. Residues 112–119 (AHIDSGKT), 187–191 (DTPGH), and 241–244 (NKMD) contribute to the GTP site.

The protein belongs to the TRAFAC class translation factor GTPase superfamily. Classic translation factor GTPase family. EF-G/EF-2 subfamily.

The protein resides in the mitochondrion. It functions in the pathway protein biosynthesis; polypeptide chain elongation. Mitochondrial GTPase that catalyzes the GTP-dependent ribosomal translocation step during translation elongation. During this step, the ribosome changes from the pre-translocational (PRE) to the post-translocational (POST) state as the newly formed A-site-bound peptidyl-tRNA and P-site-bound deacylated tRNA move to the P and E sites, respectively. Catalyzes the coordinated movement of the two tRNA molecules, the mRNA and conformational changes in the ribosome. The polypeptide is Elongation factor G, mitochondrial (mef1) (Talaromyces stipitatus (strain ATCC 10500 / CBS 375.48 / QM 6759 / NRRL 1006) (Penicillium stipitatum)).